An 85-amino-acid chain; its full sequence is Antifungal protein (85 aa).

The first 18 residues, 1–18 (MVKLFVIVILALIAVAFG), serve as a signal peptide directing secretion. 2 consecutive repeat copies span residues 19-25 (QHGHGGQ) and 67-73 (QHGHGGQ). A 2 X 7 AA repeats of Q-H-G-H-G-G-Q region spans residues 19 to 73 (QHGHGGQDQHGYGHGQQAVYGKGHEGHGVNNLGQDGHGQHGYAHGHSDQHGHGGQ). Positions 22 to 32 (HGGQDQHGYGH) are enriched in gly residues. Residues 22–85 (HGGQDQHGYG…QHDGYKNRGY (64 aa)) form a disordered region. Residues 63 to 85 (GHSDQHGHGGQHGQHDGYKNRGY) are compositionally biased toward basic and acidic residues.

In terms of assembly, homodimer. Post-translationally, the N-terminus is blocked. Hemolymph.

Its function is as follows. This protein inhibits the growth of a variety of fungal species. The antifungal activity of this protein is enhanced by the presence of sarcotoxin IA. This chain is Antifungal protein, found in Sarcophaga peregrina (Flesh fly).